We begin with the raw amino-acid sequence, 134 residues long: Interleukin-5 (134 aa).

An N-terminal signal peptide occupies residues Met-1–Ala-21. Residues Asn-76 and Asn-90 are each glycosylated (N-linked (GlcNAc...) asparagine).

Belongs to the IL-5 family. As to quaternary structure, homodimer; disulfide-linked. Interacts with IL5RA. Interacts with CSF2RB.

The protein resides in the secreted. In terms of biological role, homodimeric cytokine expressed predominantly by T-lymphocytes and NK cells that plays an important role in the survival, differentiation, and chemotaxis of eosinophils. Also acts on activated and resting B-cells to induce immunoglobulin production, growth, and differentiation. Mechanistically, exerts its biological effects through a receptor composed of IL5RA subunit and the cytokine receptor common subunit beta/CSF2RB. Binding to the receptor leads to activation of various kinases including LYN, SYK and JAK2 and thereby propagates signals through the RAS-MAPK and JAK-STAT5 pathways respectively. This is Interleukin-5 (IL5) from Canis lupus familiaris (Dog).